Consider the following 468-residue polypeptide: Glutamate--tRNA ligase (468 aa).

Positions 8-18 (PSPTGFLHVGG) match the 'HIGH' region motif. 4 residues coordinate Zn(2+): C97, C99, C124, and D126. A 'KMSKS' region motif is present at residues 236–240 (KLSKR). K239 is an ATP binding site.

It belongs to the class-I aminoacyl-tRNA synthetase family. Glutamate--tRNA ligase type 1 subfamily. As to quaternary structure, monomer. It depends on Zn(2+) as a cofactor.

The protein localises to the cytoplasm. The enzyme catalyses tRNA(Glu) + L-glutamate + ATP = L-glutamyl-tRNA(Glu) + AMP + diphosphate. Catalyzes the attachment of glutamate to tRNA(Glu) in a two-step reaction: glutamate is first activated by ATP to form Glu-AMP and then transferred to the acceptor end of tRNA(Glu). This is Glutamate--tRNA ligase from Francisella tularensis subsp. tularensis (strain SCHU S4 / Schu 4).